Here is a 683-residue protein sequence, read N- to C-terminus: DNA ligase (683 aa).

NAD(+) is bound by residues 35–39 (DTEYD), 84–85 (SL), and Glu-116. Catalysis depends on Lys-118, which acts as the N6-AMP-lysine intermediate. The NAD(+) site is built by Arg-139, Glu-176, Lys-293, and Lys-317. Cys-419, Cys-422, Cys-437, and Cys-443 together coordinate Zn(2+). In terms of domain architecture, BRCT spans 602 to 683 (AGPQLLAGKT…LMKLLAKGVE (82 aa)).

The protein belongs to the NAD-dependent DNA ligase family. LigA subfamily. Mg(2+) serves as cofactor. The cofactor is Mn(2+).

It carries out the reaction NAD(+) + (deoxyribonucleotide)n-3'-hydroxyl + 5'-phospho-(deoxyribonucleotide)m = (deoxyribonucleotide)n+m + AMP + beta-nicotinamide D-nucleotide.. Functionally, DNA ligase that catalyzes the formation of phosphodiester linkages between 5'-phosphoryl and 3'-hydroxyl groups in double-stranded DNA using NAD as a coenzyme and as the energy source for the reaction. It is essential for DNA replication and repair of damaged DNA. The chain is DNA ligase from Dechloromonas aromatica (strain RCB).